The chain runs to 677 residues: Methionine--tRNA ligase (677 aa).

A 'HIGH' region motif is present at residues 15-25; sequence PYANGSIHLGH. Zn(2+) contacts are provided by cysteine 146, cysteine 149, cysteine 159, and cysteine 162. The short motif at 333 to 337 is the 'KMSKS' region element; sequence KMSKS. Lysine 336 provides a ligand contact to ATP. One can recognise a tRNA-binding domain in the interval 575–677; that stretch reads DFAKVDLRVA…DGAKPGQQVK (103 aa).

It belongs to the class-I aminoacyl-tRNA synthetase family. MetG type 1 subfamily. Homodimer. Zn(2+) serves as cofactor.

It localises to the cytoplasm. The enzyme catalyses tRNA(Met) + L-methionine + ATP = L-methionyl-tRNA(Met) + AMP + diphosphate. Is required not only for elongation of protein synthesis but also for the initiation of all mRNA translation through initiator tRNA(fMet) aminoacylation. The chain is Methionine--tRNA ligase from Klebsiella pneumoniae (strain 342).